A 287-amino-acid polypeptide reads, in one-letter code: MDEIVKNIREGTHVLLPFYETLPELNLSLGKSPLPSLEYGANYFLQISRVNDLNRMPTDMLKLFTHDIMLPESDLDKVYEILKINSVKYYGRSTKADAVVADLSARNKLFKRERDAIKSNNHLTENNLYISDYKMLTFDVFRPLFDFVNEKYCIIKLPTLFGRGVIDTMRIYCSLFKNVRLLKCVSDSWLKDSAIMVASNVCKKNLDLFMSHVKSVTKSSSWKDVNSVQFSILNDPVDTEFINKFLEFSNRVYEALYYVHSLLYSSMTSDSKSIENKHQRRLVKLLL.

Belongs to the orthopoxvirus mRNA-capping enzyme regulatory subunit family. As to quaternary structure, interacts with the catalytic subunit OPG113.

It is found in the virion. Its function is as follows. Regulatory subunit of the mRNA cap enzyme which stabilizes the catalytic subunit and enhances its methyltransferase activity through an allosteric mechanism. Heterodimeric mRNA capping enzyme catalyzes the linkage of a N7-methyl-guanosine moiety to the first transcribed nucleotide (cap 0 structure), whereas the methyltransferase OPG102 is responsible for a second methylation at the 2'-O position of the ribose (cap 1 structure). Also involved in early viral gene transcription termination and intermediate viral gene transcription initiation. Early gene transcription termination requires the termination factor VTF, the DNA-dependent ATPase NPH-I/OPG123 and the RAP94/OPG109 subunit of the viral RNA polymerase, as well as the presence of a specific termination motif. Binds, together with RAP94/OPG109, to the termination motif 5'-UUUUUNU-3' in the nascent early mRNA. This Variola virus (isolate Human/India/Ind3/1967) (VARV) protein is mRNA-capping enzyme regulatory subunit OPG124 (OPG124).